A 334-amino-acid polypeptide reads, in one-letter code: MEAAHFFEGTEKLLEVWFSRQQSDASQGSGDLRTIPRSEWDVLLKDVQCSIISVTKTDKQEAYVLSESSMFVSKRRFILKTCGTTLLLKALVPLLKLARDYSGFDSIQSFFYSRKNFMKPSHQGYPHRNFQEEIEFLNVIFPNGAAYCMGRMNSDCWYLYTLDFPESRVISQPDQTLEILMSELDPAVMDQFYMKDGVTAKDVTRESGIRDLIPGSVIDATLFNPCGYSMNGMKSDGTYWTIHITPEPEFSYVSFETNLSQTSYDDLIRKVVEVFKPGKFVTTLFVNQSSKCRTVLSSPQKIDGFKRLDCQSAMFNDYNFVFTSFAKKQQQQQS.

Phe-7 provides a ligand contact to substrate. Active-site residues include Glu-8 and Glu-11. Glu-67 is a substrate binding site. Ser-68 acts as the Schiff-base intermediate with substrate; via pyruvic acid in catalysis. Position 68 is a pyruvic acid (Ser); by autocatalysis (Ser-68). Cys-82 serves as the catalytic Proton donor; for catalytic activity. Residue Phe-223 participates in substrate binding. Active-site proton acceptor; for processing activity residues include Ser-229 and His-243. Glu-247 is a binding site for substrate. Ser-298 is subject to Phosphoserine.

This sequence belongs to the eukaryotic AdoMetDC family. In terms of assembly, heterotetramer of two alpha and two beta chains. Pyruvate is required as a cofactor. Post-translationally, is synthesized initially as an inactive proenzyme. Formation of the active enzyme involves a self-maturation process in which the active site pyruvoyl group is generated from an internal serine residue via an autocatalytic post-translational modification. Two non-identical subunits are generated from the proenzyme in this reaction, and the pyruvate is formed at the N-terminus of the alpha chain, which is derived from the carboxyl end of the proenzyme. The post-translation cleavage follows an unusual pathway, termed non-hydrolytic serinolysis, in which the side chain hydroxyl group of the serine supplies its oxygen atom to form the C-terminus of the beta chain, while the remainder of the serine residue undergoes an oxidative deamination to produce ammonia and the pyruvoyl group blocking the N-terminus of the alpha chain.

The catalysed reaction is S-adenosyl-L-methionine + H(+) = S-adenosyl 3-(methylsulfanyl)propylamine + CO2. Its pathway is amine and polyamine biosynthesis; S-adenosylmethioninamine biosynthesis; S-adenosylmethioninamine from S-adenosyl-L-methionine: step 1/1. In terms of biological role, essential for biosynthesis of the polyamines spermidine and spermine. Promotes maintenance and self-renewal of embryonic stem cells, by maintaining spermine levels. In Mus spretus (Western Mediterranean mouse), this protein is S-adenosylmethionine decarboxylase proenzyme 2 (Amd2).